Consider the following 233-residue polypeptide: Merozoite surface protein 1 (233 aa).

A signal peptide spans 1–19 (MKIIFFLCSFLFFIINTQC). Over residues 58-67 (SGTAVTTSTP) the composition is skewed to polar residues. Residues 58-110 (SGTAVTTSTPGSKGSVASGGSGGSVASGGSVASGGSGNSRRTNPSDNSSDSDA) form a disordered region. Positions 74–94 (ASGGSGGSVASGGSVASGGSG) are enriched in gly residues. The span at 95–107 (NSRRTNPSDNSSD) shows a compositional bias: polar residues. Asn-104 is a glycosylation site (N-linked (GlcNAc...) asparagine).

In terms of assembly, forms a complex composed of subunits p83, p30, p38, and p42 which remain non-covalently associated; the complex is formed at the merozoite surface prior to egress from host erythrocytes. Forms a complex composed of processed MSP1 subunits, MSP6 subunit p36 and MSP7; the complex is formed at the merozoite surface prior to egress from host erythrocytes. Within the complex, interacts (via subunit p38) with MSP6 subunit p36 and (via subunits p83, p30 and p38) with MSP7 (via subunit p22). Forms a complex composed of MSP1, MSP6, DBLMSP1 and DBLMSP2. Within the complex, interacts (via subunit p38) with DBLMSP1 and DBLMSP2. Forms a complex composed of MSP1, and rhoptry proteins RhopH3, RAP1 and CLAG9/RhopH3. Within the complex, interacts (via subunits p42 and p19) with RhopH3 (via C-terminus). Forms a complex composed of MSP1, MSP6, MSP7, MSP9 and MSP3; within the complex, MSP6 and MSP9 mediate the binding to the host erythrocyte. Interacts (via subunits p19 and p42) with MSP9; the interaction is direct; MSP1 subunits p19 or p42, and MSP9 form a co-ligand complex that interacts with host SLC4A1/Band 3 protein. May interact with PFD6. Interacts with host spectrin. The p190 precursor is cleaved by SUB1 prior to merozoite egress into 4 subunits p83, p30, p38, and p42 which remain non-covalently associated. SUB1-mediated proteolytic cleavage occurs in an orderly manner; the first cleavage occurs at the p83/p30 site, followed by cleavage at the p30/p38 site, the last cleavage occurs at the p38/p42 site. The order of cleavage is essential for parasite viability. SUB1-mediated processing is essential for merozoite egress. In a second processing step during erythrocyte invasion, p42 is cleaved by SUB2 into p33 and p19; the latter remains attached to the merozoite surface via its GPI-anchor and stays on the surface during the subsequent ring stage.

The protein resides in the cell membrane. It is found in the secreted. Functionally, during the asexual blood stage, involved in merozoite egress from host erythrocytes possibly via its interaction with the host cytoskeleton protein spectrin resulting in the destabilization of the host cytoskeleton and thus leading to erythrocyte cell membrane rupture. Involved in the binding to host erythrocytes and is required for host erythrocyte invasion. This Plasmodium falciparum (isolate CDC / Honduras) protein is Merozoite surface protein 1.